The sequence spans 94 residues: Phosphoribosyl-ATP pyrophosphatase (94 aa).

It belongs to the PRA-PH family.

It is found in the cytoplasm. It catalyses the reaction 1-(5-phospho-beta-D-ribosyl)-ATP + H2O = 1-(5-phospho-beta-D-ribosyl)-5'-AMP + diphosphate + H(+). It functions in the pathway amino-acid biosynthesis; L-histidine biosynthesis; L-histidine from 5-phospho-alpha-D-ribose 1-diphosphate: step 2/9. This chain is Phosphoribosyl-ATP pyrophosphatase (hisE), found in Sulfurisphaera tokodaii (strain DSM 16993 / JCM 10545 / NBRC 100140 / 7) (Sulfolobus tokodaii).